We begin with the raw amino-acid sequence, 133 residues long: Large ribosomal subunit protein bL19 (133 aa).

The tract at residues 114-133 (IAERQMTAASKEEPAEKSEA) is disordered. The span at 123–133 (SKEEPAEKSEA) shows a compositional bias: basic and acidic residues.

It belongs to the bacterial ribosomal protein bL19 family.

In terms of biological role, this protein is located at the 30S-50S ribosomal subunit interface and may play a role in the structure and function of the aminoacyl-tRNA binding site. This chain is Large ribosomal subunit protein bL19, found in Phenylobacterium zucineum (strain HLK1).